The chain runs to 313 residues: Olfactory receptor 4M1 (313 aa).

Residues 1-25 (METANYTKVTEFVLTGLSQTREVQL) are Extracellular-facing. Residue asparagine 5 is glycosylated (N-linked (GlcNAc...) asparagine). A helical transmembrane segment spans residues 26 to 49 (VLFVIFLSFYLFILPGNILIICTI). Residues 50-57 (RLDPHLTS) lie on the Cytoplasmic side of the membrane. The helical transmembrane segment at 58–79 (PMYFLLANLALLDIWYSSITAP) threads the bilayer. Residues 80–100 (KMLIDFFVERKIISFGGCIAQ) lie on the Extracellular side of the membrane. Cysteine 97 and cysteine 189 form a disulfide bridge. Residues 101 to 120 (LFFLHFVGASEMFLLTVMAY) traverse the membrane as a helical segment. Over 121–139 (DRYAAICRPLHYATIMNRR) the chain is Cytoplasmic. The helical transmembrane segment at 140 to 158 (LCCILVALSWMGGFIHSII) threads the bilayer. At 159 to 195 (QVALIVRLPFCGPNELDSYFCDITQVVRIACANTFPE) the chain is on the extracellular side. The chain crosses the membrane as a helical span at residues 196–219 (ELVMICSSGLISVVCFIALLMSYA). At 220-237 (FLLALLKKHSGSGENTNR) the chain is on the cytoplasmic side. Residues 238–260 (AMSTCYSHITIVVLMFGPSIYIY) form a helical membrane-spanning segment. Over 261-271 (ARPFDSFSLDK) the chain is Extracellular. A helical membrane pass occupies residues 272 to 291 (VVSVFHTVIFPLLNPIIYTL). Over 292–313 (RNKEVKAAMRKVVTKYILCEEK) the chain is Cytoplasmic.

The protein belongs to the G-protein coupled receptor 1 family. Highly expressed in the testis and olfactory bulb.

The protein resides in the cell membrane. In terms of biological role, olfactory receptor that acts as a receptor of Asprosin hormone, potentially at the surface of hepatocytes and may help to promote hepatocyte glucose release. This chain is Olfactory receptor 4M1, found in Homo sapiens (Human).